The sequence spans 203 residues: Holliday junction branch migration complex subunit RuvA (203 aa).

Residues 1 to 64 (MIGRLRGIII…EDAQLLYGFN (64 aa)) are domain I. Residues 65 to 142 (NKQERTLFKE…KGLHGDLFTP (78 aa)) form a domain II region. A flexible linker region spans residues 143–154 (AADLVLTSPASP). Residues 155-203 (ATNDAEQEAVAALVALGYKPQEASRMVSKIARPDASSETLIREALRAAL) form a domain III region.

The protein belongs to the RuvA family. In terms of assembly, homotetramer. Forms an RuvA(8)-RuvB(12)-Holliday junction (HJ) complex. HJ DNA is sandwiched between 2 RuvA tetramers; dsDNA enters through RuvA and exits via RuvB. An RuvB hexamer assembles on each DNA strand where it exits the tetramer. Each RuvB hexamer is contacted by two RuvA subunits (via domain III) on 2 adjacent RuvB subunits; this complex drives branch migration. In the full resolvosome a probable DNA-RuvA(4)-RuvB(12)-RuvC(2) complex forms which resolves the HJ.

It localises to the cytoplasm. Functionally, the RuvA-RuvB-RuvC complex processes Holliday junction (HJ) DNA during genetic recombination and DNA repair, while the RuvA-RuvB complex plays an important role in the rescue of blocked DNA replication forks via replication fork reversal (RFR). RuvA specifically binds to HJ cruciform DNA, conferring on it an open structure. The RuvB hexamer acts as an ATP-dependent pump, pulling dsDNA into and through the RuvAB complex. HJ branch migration allows RuvC to scan DNA until it finds its consensus sequence, where it cleaves and resolves the cruciform DNA. The chain is Holliday junction branch migration complex subunit RuvA from Escherichia coli O9:H4 (strain HS).